The sequence spans 526 residues: Probable lipid II flippase MurJ (526 aa).

The next 14 membrane-spanning stretches (helical) occupy residues 35–55, 58–78, 96–116, 137–157, 160–180, 190–210, 235–255, 281–301, 313–333, 362–382, 391–411, 415–435, 459–479, and 489–509; these read LMGT…PNLF, LFAE…HYSM, AIFT…ILGA, MFPY…LHSI, FVPS…SMYF, IAAA…QLIF, IIAL…NDLV, LLGI…SFHV, LITA…FVLF, WHSV…AFYA, IAGT…FIPL, GIAF…WMFL, LFSV…AYFF, and GVPL…LLLL.

Belongs to the MurJ/MviN family.

The protein localises to the cell inner membrane. It participates in cell wall biogenesis; peptidoglycan biosynthesis. Involved in peptidoglycan biosynthesis. Transports lipid-linked peptidoglycan precursors from the inner to the outer leaflet of the cytoplasmic membrane. The protein is Probable lipid II flippase MurJ of Treponema pallidum (strain Nichols).